Reading from the N-terminus, the 1137-residue chain is Voltage-dependent calcium channel subunit alpha-2/delta-4 (1137 aa).

A signal peptide spans 1–19; it reads MVCGCSALLPLPNPRPTMP. The Extracellular segment spans residues 20 to 1115; sequence ATPNFLANPS…AQDCGGASDT (1096 aa). Residue asparagine 201 is glycosylated (N-linked (GlcNAc...) asparagine). Positions 291 to 473 constitute a VWFA domain; sequence DIVILVDVSG…ENVMEYLHVL (183 aa). Residues aspartate 297, serine 299, and serine 301 each contribute to the a divalent metal cation site. Positions 297 to 301 match the MIDAS-like motif motif; sequence DVSGS. Cysteines 447 and 1097 form a disulfide. In terms of domain architecture, Cache spans 487-580; sequence WTEAYMDSKL…RPLYREGKKL (94 aa). A glycan (N-linked (GlcNAc...) asparagine) is linked at asparagine 664. The helical transmembrane segment at 1116-1136 threads the bilayer; it reads SASPPLLLLPVCAWGLLPQLL. A topological domain (cytoplasmic) is located at residue arginine 1137.

Belongs to the calcium channel subunit alpha-2/delta family. In terms of assembly, dimer formed of alpha-2-2 and delta-2 chains; disulfide-linked. Voltage-dependent calcium channels are multisubunit complexes, consisting of alpha-1 (CACNA1), alpha-2 (CACNA2D), beta (CACNB) and delta (CACNA2D) subunits in a 1:1:1:1 ratio. Interacts with CACNA1C and CACNB3. In terms of processing, may be proteolytically processed into subunits alpha-2-4 and delta-4 that are disulfide-linked. It is however unclear whether such cleavage really takes place in vivo and has a functional role. In terms of tissue distribution, predominantly expressed in certain types of endocrine cells. Present in the Paneth cells of the small intestine. Also present in the erythroblasts in the fetal liver, in the cells of the zona reticularis of the adrenal gland and in the basophils of the pituitary. Present at low level in some brain regions such as the cerebellum (at protein level).

It localises to the membrane. The alpha-2/delta subunit of voltage-dependent calcium channels regulates calcium current density and activation/inactivation kinetics of the calcium channel. The polypeptide is Voltage-dependent calcium channel subunit alpha-2/delta-4 (CACNA2D4) (Homo sapiens (Human)).